Consider the following 233-residue polypeptide: Large ribosomal subunit protein uL1 (233 aa).

This sequence belongs to the universal ribosomal protein uL1 family. As to quaternary structure, part of the 50S ribosomal subunit.

Functionally, binds directly to 23S rRNA. The L1 stalk is quite mobile in the ribosome, and is involved in E site tRNA release. Its function is as follows. Protein L1 is also a translational repressor protein, it controls the translation of the L11 operon by binding to its mRNA. This Pelobacter propionicus (strain DSM 2379 / NBRC 103807 / OttBd1) protein is Large ribosomal subunit protein uL1.